The following is a 376-amino-acid chain: Cytochrome b (376 aa).

4 consecutive transmembrane segments (helical) span residues 28–48 (YGFLLGIIFFIQILTGVFLAS), 72–94 (WCFRYMHATGASLVFFLTYLHIL), 107–127 (SWISGLIIFALFIVTAFIGYV), and 169–189 (FFVLHFILPFVALCIVFIHIF). Residues histidine 78 and histidine 92 each contribute to the heme b site. Heme b-binding residues include histidine 173 and histidine 187. Residue histidine 192 participates in a ubiquinone binding. 4 helical membrane-spanning segments follow: residues 214 to 234 (LLSLDVKGFNNILILFLIQSI), 274 to 294 (IPSKNAGLVIVIASLQLLFLL), 317 to 337 (VPIIWFMCSFYALLWIGCPLP), and 340 to 360 (IFILYGRLFIILFFSSGLFSL).

It belongs to the cytochrome b family. As to quaternary structure, the main subunits of complex b-c1 are: cytochrome b, cytochrome c1 and the Rieske protein. Requires heme b as cofactor.

It localises to the mitochondrion inner membrane. Component of the ubiquinol-cytochrome c reductase complex (complex III or cytochrome b-c1 complex) that is part of the mitochondrial respiratory chain. The b-c1 complex mediates electron transfer from ubiquinol to cytochrome c. Contributes to the generation of a proton gradient across the mitochondrial membrane that is then used for ATP synthesis. The polypeptide is Cytochrome b (MT-CYB) (Plasmodium berghei).